The chain runs to 217 residues: Outer-membrane lipoprotein LolB (217 aa).

Positions 1–20 (MSRAVRTLALGGLVLVGLSA) are cleaved as a signal peptide. Cys21 carries N-palmitoyl cysteine lipidation. The S-diacylglycerol cysteine moiety is linked to residue Cys21.

The protein belongs to the LolB family. Monomer.

The protein localises to the cell outer membrane. Functionally, plays a critical role in the incorporation of lipoproteins in the outer membrane after they are released by the LolA protein. This is Outer-membrane lipoprotein LolB from Xanthomonas euvesicatoria pv. vesicatoria (strain 85-10) (Xanthomonas campestris pv. vesicatoria).